A 264-amino-acid chain; its full sequence is Thymidylate synthase (264 aa).

Residue Arg-21 participates in dUMP binding. His-51 contributes to the (6R)-5,10-methylene-5,6,7,8-tetrahydrofolate binding site. Cys-146 acts as the Nucleophile in catalysis. Residues 166-169, Asn-177, and 207-209 each bind dUMP; these read RSAD and HIY. (6R)-5,10-methylene-5,6,7,8-tetrahydrofolate is bound at residue Asp-169. (6R)-5,10-methylene-5,6,7,8-tetrahydrofolate is bound at residue Ala-263.

It belongs to the thymidylate synthase family. Bacterial-type ThyA subfamily. As to quaternary structure, homodimer.

It is found in the cytoplasm. The enzyme catalyses dUMP + (6R)-5,10-methylene-5,6,7,8-tetrahydrofolate = 7,8-dihydrofolate + dTMP. Its pathway is pyrimidine metabolism; dTTP biosynthesis. Functionally, catalyzes the reductive methylation of 2'-deoxyuridine-5'-monophosphate (dUMP) to 2'-deoxythymidine-5'-monophosphate (dTMP) while utilizing 5,10-methylenetetrahydrofolate (mTHF) as the methyl donor and reductant in the reaction, yielding dihydrofolate (DHF) as a by-product. This enzymatic reaction provides an intracellular de novo source of dTMP, an essential precursor for DNA biosynthesis. This chain is Thymidylate synthase, found in Brucella canis (strain ATCC 23365 / NCTC 10854 / RM-666).